The chain runs to 221 residues: ATP-dependent dethiobiotin synthetase BioD (221 aa).

11–16 (GVGKTY) serves as a coordination point for ATP. Thr-15 serves as a coordination point for Mg(2+). The active site involves Lys-36. Thr-40 contacts substrate. ATP is bound by residues Asp-48 and 107–110 (EGAG). Residues Asp-48 and Glu-107 each coordinate Mg(2+).

This sequence belongs to the dethiobiotin synthetase family. In terms of assembly, homodimer. Mg(2+) serves as cofactor.

It localises to the cytoplasm. The catalysed reaction is (7R,8S)-7,8-diammoniononanoate + CO2 + ATP = (4R,5S)-dethiobiotin + ADP + phosphate + 3 H(+). It functions in the pathway cofactor biosynthesis; biotin biosynthesis; biotin from 7,8-diaminononanoate: step 1/2. Catalyzes a mechanistically unusual reaction, the ATP-dependent insertion of CO2 between the N7 and N8 nitrogen atoms of 7,8-diaminopelargonic acid (DAPA, also called 7,8-diammoniononanoate) to form a ureido ring. The protein is ATP-dependent dethiobiotin synthetase BioD of Hydrogenobaculum sp. (strain Y04AAS1).